We begin with the raw amino-acid sequence, 364 residues long: MGKGGMSQGEGSKVEEENMAAWLVGINTLKIQPFLLPSVGPHDVRVRMKAVGICGSDVHYLKTMRCADFVVKEPMVIGHECAGIIEEVGEEVKHLVVGDRVALEPGISCWRCNLCREGRYNLCPEMKFFATPPVHGSLANQVVHPADLCFKLPENVSLEEGAMCEPLSVGVHACRRAEVGPETNVLVMGAGPIGLVTMLAARAFSVPRIVIVDVDENRLAVAKQLGADEIVQVTTNLEDVGSEVEQIQKAMGSNIDVTFDCAGFNKTMSTALAATRCGGKVCLVGMGHGIMTVPLTPAAAREVDVVGVFRYKNTWPLCLEFLTSGKIDVKPLITHRFGFSQKEVEDAFETSARGSNAIKVMFNL.

A Zn(2+)-binding site is contributed by Cys-54. Tyr-60 is a substrate binding site. The Zn(2+) site is built by His-79 and Glu-80. Residue Glu-165 participates in substrate binding. NAD(+) contacts are provided by residues Ile-193, Asp-213, Arg-218, 284-286, and 308-310; these read VGM and VFR. Substrate-binding residues include Arg-310 and Tyr-311.

Belongs to the zinc-containing alcohol dehydrogenase family. Homotetramer. Zn(2+) serves as cofactor. As to expression, mostly expressed in dry seeds and leaves, and, to a lower extent, in roots, stems, flowers and siliques (at protein level).

It is found in the mitochondrion membrane. Its subcellular location is the cell membrane. The protein resides in the cytoplasm. It localises to the cytosol. The enzyme catalyses keto-D-fructose + NADH + H(+) = D-sorbitol + NAD(+). It carries out the reaction ribitol + NAD(+) = D-ribulose + NADH + H(+). The catalysed reaction is xylitol + NAD(+) = D-xylulose + NADH + H(+). Polyol dehydrogenase that catalyzes the NAD(+)-dependent oxidation of various sugar alcohols. Is mostly active with D-sorbitol (D-glucitol), ribitol and xylitol as substrates, leading to the C2-oxidized products D-fructose, D-ribulose and D-xylulose, respectively. To a lesser extent, can also oxidize arabitol, mannitol, lactitol and maltitol in vitro. Is required for sorbitol metabolism. Cannot use NADP(+) as the electron acceptor. This chain is Sorbitol dehydrogenase (SDH), found in Arabidopsis thaliana (Mouse-ear cress).